Here is a 635-residue protein sequence, read N- to C-terminus: Cationic amino acid transporter 4 (635 aa).

3 helical membrane passes run 42–62 (LTLLGVGGMVGSGLYVLTGTV), 66–86 (MAGPAVLLSFLVAAVASLLAA), and 113–133 (IWAFLIGWNVLLEYLIGGAAV). Residues asparagine 146, asparagine 151, and asparagine 195 are each glycosylated (N-linked (GlcNAc...) asparagine). A helical membrane pass occupies residues 197–217 (TFSAISLIVILFIIVLGFILA). Asparagine 221 carries an N-linked (GlcNAc...) asparagine glycan. 5 consecutive transmembrane segments (helical) span residues 229–249 (FAPFGFSGILAGTATCFYAFV), 270–290 (MAIAISLSLAAGAYILVSTVL), 318–338 (GFIVAVGSICAMNTVLLSNLF), 365–385 (QVPVVGILVFGVLMALLALLL), and 391–411 (VQFLSIGTLLAYTFVATSIIV). A phosphoserine mark is found at serine 422 and serine 427. The next 4 membrane-spanning stretches (helical) occupy residues 478 to 498 (VAWALGILVASAISLACVLVF), 508 to 528 (WGYVLLLVISGAVFLSSLLVL), 539 to 559 (TFQIPLVPLTPALSILLNTCL), and 567 to 587 (TWLRFIFWLLVGLVVYFGYGI).

Belongs to the amino acid-polyamine-organocation (APC) superfamily. Cationic amino acid transporter (CAT) (TC 2.A.3.3) family.

Its subcellular location is the membrane. Involved in the transport of the cationic amino acids (arginine, lysine and ornithine). This Mus musculus (Mouse) protein is Cationic amino acid transporter 4 (Slc7a4).